The following is a 537-amino-acid chain: Phosphoenolpyruvate carboxykinase (ATP) (537 aa).

Substrate-binding residues include Arg-64, Tyr-204, and Lys-210. ATP contacts are provided by residues Lys-210, His-229, and 245–253 (GLSGTGKTT). Positions 210 and 229 each coordinate Mn(2+). Residue Asp-266 participates in Mn(2+) binding. ATP is bound by residues Glu-294, Arg-330, 446–447 (RI), and Thr-452. Arg-330 is a binding site for substrate.

The protein belongs to the phosphoenolpyruvate carboxykinase (ATP) family. As to quaternary structure, monomer. Requires Mn(2+) as cofactor.

Its subcellular location is the cytoplasm. It carries out the reaction oxaloacetate + ATP = phosphoenolpyruvate + ADP + CO2. The protein operates within carbohydrate biosynthesis; gluconeogenesis. In terms of biological role, involved in the gluconeogenesis. Catalyzes the conversion of oxaloacetate (OAA) to phosphoenolpyruvate (PEP) through direct phosphoryl transfer between the nucleoside triphosphate and OAA. This chain is Phosphoenolpyruvate carboxykinase (ATP), found in Aliivibrio fischeri (strain ATCC 700601 / ES114) (Vibrio fischeri).